Here is a 1402-residue protein sequence, read N- to C-terminus: DNA-directed RNA polymerase subunit beta' (1402 aa).

C71, C73, C86, and C89 together coordinate Zn(2+). Positions 462, 464, and 466 each coordinate Mg(2+). Zn(2+) contacts are provided by C811, C885, C892, and C895.

This sequence belongs to the RNA polymerase beta' chain family. In terms of assembly, the RNAP catalytic core consists of 2 alpha, 1 beta, 1 beta' and 1 omega subunit. When a sigma factor is associated with the core the holoenzyme is formed, which can initiate transcription. It depends on Mg(2+) as a cofactor. The cofactor is Zn(2+).

It carries out the reaction RNA(n) + a ribonucleoside 5'-triphosphate = RNA(n+1) + diphosphate. Its function is as follows. DNA-dependent RNA polymerase catalyzes the transcription of DNA into RNA using the four ribonucleoside triphosphates as substrates. The protein is DNA-directed RNA polymerase subunit beta' of Rhizobium johnstonii (strain DSM 114642 / LMG 32736 / 3841) (Rhizobium leguminosarum bv. viciae).